The following is a 458-amino-acid chain: UDP-N-acetylmuramoylalanine--D-glutamate ligase (458 aa).

ATP is bound at residue 119-125; sequence GSNGKTT.

This sequence belongs to the MurCDEF family.

It is found in the cytoplasm. It carries out the reaction UDP-N-acetyl-alpha-D-muramoyl-L-alanine + D-glutamate + ATP = UDP-N-acetyl-alpha-D-muramoyl-L-alanyl-D-glutamate + ADP + phosphate + H(+). It participates in cell wall biogenesis; peptidoglycan biosynthesis. Its function is as follows. Cell wall formation. Catalyzes the addition of glutamate to the nucleotide precursor UDP-N-acetylmuramoyl-L-alanine (UMA). This is UDP-N-acetylmuramoylalanine--D-glutamate ligase from Limosilactobacillus fermentum (strain NBRC 3956 / LMG 18251) (Lactobacillus fermentum).